The sequence spans 359 residues: Peroxisome assembly protein 12 (359 aa).

Topologically, residues 1–19 (MAEYGAHITTASVADDQPS) are peroxisomal matrix. A helical membrane pass occupies residues 20-47 (IFEVVAQDSLMTAVRPALQHVVKVLAES). Residues 48-51 (NPAH) lie on the Cytoplasmic side of the membrane. A helical membrane pass occupies residues 52–76 (YGFLWRWFDEIFTLLDFLLQQHYLS). At 77–109 (RTSASFSEHFYGLKRIVAGSSPHLQRPASAGLP) the chain is on the peroxisomal matrix side. The chain crosses the membrane as a helical span at residues 110–139 (KEHLWKSAMFLVLLPYLKVKLEKLASSLRE). Residues 140–144 (EDEYS) are Cytoplasmic-facing. Residues 145–183 (IHPPSSRWKRFYRAFLAAYPFVNMAWEGWFLTQQLRYIL) form a helical membrane-spanning segment. Over 184-249 (GKAEHHSPLL…VGGVALSLST (66 aa)) the chain is Peroxisomal matrix. A helical membrane pass occupies residues 250 to 277 (GLSVGVFFLQFLDWWYSSENQEAIKSLT). Residues 278 to 359 (ALPTPPPPVH…HLIKLYSPEN (82 aa)) lie on the Cytoplasmic side of the membrane. Residues Cys-304, Cys-307, Cys-325, and Cys-328 each coordinate Zn(2+). The RING-type; degenerate zinc finger occupies 304–343 (CPLCRKTRVNDTVLATSGYVFCYRCVFNYVRSHQACPITG).

It belongs to the pex2/pex10/pex12 family. As to quaternary structure, component of the PEX2-PEX10-PEX12 retrotranslocation channel, composed of PEX2, PEX10 and PEX12. Interacts with PEX19 via its cytoplasmic domain.

The protein localises to the peroxisome membrane. The protein operates within protein modification; protein ubiquitination. In terms of biological role, component of a retrotranslocation channel required for peroxisome organization by mediating export of the PEX5 receptor from peroxisomes to the cytosol, thereby promoting PEX5 recycling. The retrotranslocation channel is composed of PEX2, PEX10 and PEX12; each subunit contributing transmembrane segments that coassemble into an open channel that specifically allows the passage of PEX5 through the peroxisomal membrane. PEX12 also regulates PEX5 recycling by activating the E3 ubiquitin-protein ligase activity of PEX10. When PEX5 recycling is compromised, PEX12 stimulates PEX10-mediated polyubiquitination of PEX5, leading to its subsequent degradation. This is Peroxisome assembly protein 12 (Pex12) from Mus musculus (Mouse).